Reading from the N-terminus, the 249-residue chain is dTDP-4-amino-2,3,4,6-tetradeoxy-D-glucose N,N-dimethyltransferase (249 aa).

Residue Arg-30 coordinates substrate. S-adenosyl-L-methionine contacts are provided by residues Ala-59, Glu-80, and 102–103; that span reads DI. Substrate is bound by residues Thr-165, 178 to 182, and Arg-241; that span reads RLSHS.

This sequence belongs to the methyltransferase TylM1/DesVI family. As to quaternary structure, homodimer. Mg(2+) is required as a cofactor.

It catalyses the reaction dTDP-4-amino-2,3,4,6-tetradeoxy-alpha-D-erythro-hexopyranose + 2 S-adenosyl-L-methionine = dTDP-alpha-D-forosamine + 2 S-adenosyl-L-homocysteine + 2 H(+). Involved in the biosynthesis of forosamine ((4-dimethylamino)-2,3,4,6-tetradeoxy-alpha-D-threo-hexopyranose), a highly deoxygenated sugar component of several bioactive natural products such as the insecticidal spinosyns A and D. Catalyzes the dimethylation of the C-4 amino group from dTDP-4-amino-2,3,4,6-tetradeoxy-alpha-D-glucose to yield dTDP-D-forosamine. This is dTDP-4-amino-2,3,4,6-tetradeoxy-D-glucose N,N-dimethyltransferase from Saccharopolyspora spinosa.